A 1024-amino-acid chain; its full sequence is Gamma-tubulin complex component 5 (1024 aa).

3 disordered regions span residues 153-203 (IGLG…GGPQ), 523-545 (NEDK…SSRQ), and 853-873 (SQAK…GPPK). A compositionally biased stretch (basic and acidic residues) spans 189-198 (TPLEEQDHNR). Over residues 529–543 (DSASASSGSDQGPSS) the composition is skewed to low complexity. The segment covering 853–864 (SQAKEDIPRDQD) has biased composition (basic and acidic residues).

It belongs to the TUBGCP family. Component of the gamma-tubulin ring complex (gTuRC) consisting of TUBGCP2, TUBGCP3, TUBGCP4, TUBGCP5 and TUBGCP6 and gamma-tubulin TUBG1 or TUBG2. TUBGCP2, TUBGCP3, TUBGCP4, TUBGCP5 and TUBGCP6 assemble in a 5:5:2:1:1 stoichiometry; each is associated with a gamma-tubulin, thereby arranging 14 gamma-tubulins in a helical manner. Gamma-tubulin at the first position is blocked by TUBGCP3 at the last position, allowing 13 protafilaments to grow into a microtubule. The gTuRC (via TUBGCP3 and TUBGCP6) interacts with ACTB and MZT1; the interactions form a luminal bridge that stabilizes the initial structure during complex assembly. The gTuRC (via TUBGCP2) interacts with MZT2A/MZT2B and CDK5RAP2 (via CM1 motif); the interactions play a role in gTuRC activation.

The protein localises to the cytoplasm. It is found in the cytoskeleton. It localises to the microtubule organizing center. Its subcellular location is the centrosome. In terms of biological role, component of the gamma-tubulin ring complex (gTuRC) which mediates microtubule nucleation. The gTuRC regulates the minus-end nucleation of alpha-beta tubulin heterodimers that grow into microtubule protafilaments, a critical step in centrosome duplication and spindle formation. This chain is Gamma-tubulin complex component 5 (Tubgcp5), found in Mus musculus (Mouse).